Here is a 273-residue protein sequence, read N- to C-terminus: Putative phosphoenolpyruvate synthase regulatory protein (273 aa).

153–160 (GVSRSGKT) is a binding site for ADP.

It belongs to the pyruvate, phosphate/water dikinase regulatory protein family. PSRP subfamily.

The enzyme catalyses [pyruvate, water dikinase] + ADP = [pyruvate, water dikinase]-phosphate + AMP + H(+). The catalysed reaction is [pyruvate, water dikinase]-phosphate + phosphate + H(+) = [pyruvate, water dikinase] + diphosphate. Bifunctional serine/threonine kinase and phosphorylase involved in the regulation of the phosphoenolpyruvate synthase (PEPS) by catalyzing its phosphorylation/dephosphorylation. The sequence is that of Putative phosphoenolpyruvate synthase regulatory protein from Verminephrobacter eiseniae (strain EF01-2).